Reading from the N-terminus, the 263-residue chain is Phosphatidylglycerol--prolipoprotein diacylglyceryl transferase (263 aa).

Transmembrane regions (helical) follow at residues 7–27 (IFSI…LGIV), 50–70 (LLTA…VLIY), 85–105 (TWKG…AVII), and 112–132 (IPIF…LFLG). A 1,2-diacyl-sn-glycero-3-phospho-(1'-sn-glycerol) is bound at residue Arg133. A run of 3 helical transmembrane segments spans residues 169 to 189 (LYEA…LFFL), 197 to 217 (GTLT…VEFF), and 233 to 253 (MGQL…LSAL).

Belongs to the Lgt family.

Its subcellular location is the cell membrane. It carries out the reaction L-cysteinyl-[prolipoprotein] + a 1,2-diacyl-sn-glycero-3-phospho-(1'-sn-glycerol) = an S-1,2-diacyl-sn-glyceryl-L-cysteinyl-[prolipoprotein] + sn-glycerol 1-phosphate + H(+). Its pathway is protein modification; lipoprotein biosynthesis (diacylglyceryl transfer). In terms of biological role, catalyzes the transfer of the diacylglyceryl group from phosphatidylglycerol to the sulfhydryl group of the N-terminal cysteine of a prolipoprotein, the first step in the formation of mature lipoproteins. This Wolbachia sp. subsp. Brugia malayi (strain TRS) protein is Phosphatidylglycerol--prolipoprotein diacylglyceryl transferase.